The primary structure comprises 505 residues: Putative thymidine phosphorylase (505 aa).

The protein belongs to the thymidine/pyrimidine-nucleoside phosphorylase family. Type 2 subfamily.

The catalysed reaction is thymidine + phosphate = 2-deoxy-alpha-D-ribose 1-phosphate + thymine. This is Putative thymidine phosphorylase from Hahella chejuensis (strain KCTC 2396).